The chain runs to 59 residues: Large ribosomal subunit protein uL30 (59 aa).

It belongs to the universal ribosomal protein uL30 family. As to quaternary structure, part of the 50S ribosomal subunit.

The chain is Large ribosomal subunit protein uL30 from Desulforamulus reducens (strain ATCC BAA-1160 / DSM 100696 / MI-1) (Desulfotomaculum reducens).